Here is a 206-residue protein sequence, read N- to C-terminus: Small ribosomal subunit protein uS4 (206 aa).

The 61-residue stretch at 96–156 folds into the S4 RNA-binding domain; that stretch reads SRLDNVVYRM…EKSKNQLRIQ (61 aa).

Belongs to the universal ribosomal protein uS4 family. As to quaternary structure, part of the 30S ribosomal subunit. Contacts protein S5. The interaction surface between S4 and S5 is involved in control of translational fidelity.

In terms of biological role, one of the primary rRNA binding proteins, it binds directly to 16S rRNA where it nucleates assembly of the body of the 30S subunit. Its function is as follows. With S5 and S12 plays an important role in translational accuracy. The sequence is that of Small ribosomal subunit protein uS4 from Teredinibacter turnerae (strain ATCC 39867 / T7901).